The chain runs to 185 residues: Probable RNA polymerase sigma-C factor (185 aa).

Positions 52-65 match the Polymerase core binding motif; the sequence is DLTQETFLRAIGAI. The H-T-H motif DNA-binding region spans 149-168; the sequence is YADAAAVCGCPVGTIRSRVA.

The protein belongs to the sigma-70 factor family. ECF subfamily.

In terms of biological role, sigma factors are initiation factors that promote the attachment of RNA polymerase to specific initiation sites and are then released. The chain is Probable RNA polymerase sigma-C factor (sigC) from Mycobacterium bovis (strain ATCC BAA-935 / AF2122/97).